Consider the following 391-residue polypeptide: Probable sugar efflux transporter (391 aa).

12 helical membrane-spanning segments follow: residues 16–36 (VFVF…PVAL), 51–71 (VGLM…PLML), 82–102 (LLFL…AWNF), 110–130 (MGIA…VIRV), 138–158 (QALG…LPLG), 170–190 (TFGV…KLLP), 210–230 (PLLM…FTTY), 247–267 (ITTL…FLFS), 277–297 (FIAF…VFKN), 300–320 (WVIF…TIAL), 338–358 (IFSG…SIVI), and 361–381 (LGLE…LFWL).

The protein belongs to the major facilitator superfamily. SotB (TC 2.A.1.2) family.

Its subcellular location is the cell inner membrane. Functionally, involved in the efflux of sugars. The physiological role may be the reduction of the intracellular concentration of toxic sugars or sugar metabolites. This is Probable sugar efflux transporter from Helicobacter pylori (strain HPAG1).